An 822-amino-acid polypeptide reads, in one-letter code: Calpain-3 (822 aa).

Positions 1–36 (MPTVISASVAPRTGAEPRSPGPIAQAAQGKGTEAGG) are disordered. In terms of domain architecture, Calpain catalytic spans 74-418 (LFVDPEFPPD…FTKLEICNLT (345 aa)). Catalysis depends on residues Cys-129, His-335, and Asn-359. The interval 419–587 (ADALESDKLQ…KRNLSEEVEN (169 aa)) is domain III. The linker stretch occupies residues 588 to 649 (TISVDRPVKK…LKPGNIDQES (62 aa)). Residues 600–651 (PKPIIFGSDRANSNKELGVDQESEEGKDNTSPDKQAKSPQLKPGNIDQESKE) form a disordered region. The span at 623–635 (EEGKDNTSPDKQA) shows a compositional bias: basic and acidic residues. 4 consecutive EF-hand domains span residues 650–684 (KEQR…VVNK), 693–726 (FTLE…KKIK), 723–758 (KKIK…AGFH), and 788–822 (VRLE…TMYA). Residues 650 to 822 (KEQRQFRNIF…LEWLQLTMYA (173 aa)) are domain IV. Ca(2+) is bound by residues Ala-663, Asp-666, Glu-668, Glu-673, Asp-706, Asp-708, Ser-710, Arg-712, Glu-717, Asp-736, Asp-738, Ser-740, Thr-742, Glu-747, Asp-801, Asp-803, Asp-805, and Ile-807.

It belongs to the peptidase C2 family. As to quaternary structure, homodimer; via EF-hand domain 4. Interacts with TTN/titin. Interacts with CMYA5; this interaction, which results in CMYA5 proteolysis, may protect CAPN3 from autolysis. Interacts with SIMC1. Interacts with UTP25; the interaction is required for CAPN3 translocation to the nucleolus. Skeletal muscle.

It is found in the cytoplasm. The protein localises to the nucleus. The protein resides in the nucleolus. It catalyses the reaction Broad endopeptidase activity.. Activated by micromolar concentrations of calcium and inhibited by calpastatin. In terms of biological role, calcium-regulated non-lysosomal thiol-protease. Proteolytically cleaves CTBP1. Mediates, with UTP25, the proteasome-independent degradation of p53/TP53. The sequence is that of Calpain-3 (CAPN3) from Ovis aries (Sheep).